A 1577-amino-acid polypeptide reads, in one-letter code: High molecular weight form of myosin-1 (1577 aa).

The Myosin motor domain maps to 75-751 (KSVDDLVQMD…EQRGLELQRN (677 aa)). N6,N6,N6-trimethyllysine is present on lysine 119. 168–175 (GESGAGKT) contacts ATP. 2 actin-binding regions span residues 628 to 650 (LDSLMTALNATEPHYIRCIKPNS) and 730 to 744 (QVGKTRVLYRAPEQR). Residues 755–782 (ERVTIQIQAGVRRMFARRLYKRMRAIKP) enclose the IQ domain. The region spanning 1261–1401 (WTKSPIPTSL…PNVEQILAAK (141 aa)) is the MyTH4 domain. Disordered stretches follow at residues 1442 to 1466 (SRPAQARAQPGQQAQPAGAARQQAA) and 1483 to 1516 (QQQQQQQGYDQQQQAYGGGADYGQQQQQQDLPAE). 2 stretches are compositionally biased toward low complexity: residues 1444-1466 (PAQARAQPGQQAQPAGAARQQAA) and 1483-1497 (QQQQQQQGYDQQQQA). Residues 1519–1577 (EEYKQVEVVYDYDGGGDAQRLVLVKGAIITVIKEYEGWAYGSTDDGQVGLYPINYTRPI) form the SH3 domain.

It belongs to the TRAFAC class myosin-kinesin ATPase superfamily. Myosin family. As to quaternary structure, myosin I heavy chain is single-headed.

The chain is High molecular weight form of myosin-1 from Acanthamoeba castellanii (Amoeba).